The following is a 218-amino-acid chain: Glutathione S-transferase Mu 1 (218 aa).

The 87-residue stretch at 2-88 folds into the GST N-terminal domain; sequence PMILGYWDIR…YIARKHNLCG (87 aa). Glutathione-binding positions include 7-8, 43-46, K50, 59-60, and 72-73; these read YW, RSQW, NL, and QS. In terms of domain architecture, GST C-terminal spans 90–208; the sequence is TEEEMIRVDI…KSSRFLPGPL (119 aa). Y116 serves as a coordination point for substrate.

This sequence belongs to the GST superfamily. Mu family. Homodimer.

Its subcellular location is the cytoplasm. The enzyme catalyses RX + glutathione = an S-substituted glutathione + a halide anion + H(+). It carries out the reaction prostaglandin A2 + glutathione = prostaglandin A2-S-(R)-glutathione. The catalysed reaction is prostaglandin J2 + glutathione = prostaglandin J2-S-(R)-glutathione. It catalyses the reaction prostaglandin J2 + glutathione = prostaglandin J2-S-(S)-glutathione. The enzyme catalyses prostaglandin A2 + glutathione = prostaglandin A2-S-(S)-glutathione. It carries out the reaction 11(S)-hydroxy-14(S),15(S)-epoxy-(5Z,8Z,12E)-eicosatrienoate + glutathione = (11S,15S)-dihydroxy-14(R)-S-glutathionyl-(5Z,8Z,12E)-eicosatrienoate. Functionally, conjugation of reduced glutathione to a wide number of exogenous and endogenous hydrophobic electrophiles. Protects against the thiol-mediated metal-catalyzed oxidative inactivation of enzymes. Involved in the formation of glutathione conjugates of both prostaglandin A2 (PGA2) and prostaglandin J2 (PGJ2). Participates in the formation of novel hepoxilin regioisomers. The protein is Glutathione S-transferase Mu 1 (GSTM1) of Bos taurus (Bovine).